Consider the following 120-residue polypeptide: NAD(P)H-quinone oxidoreductase subunit 3, chloroplastic (120 aa).

The next 3 membrane-spanning stretches (helical) occupy residues 14 to 34 (LIIS…LAPI), 64 to 84 (MFAL…PWAM), and 88 to 108 (ILGV…IVGL).

It belongs to the complex I subunit 3 family. As to quaternary structure, NDH is composed of at least 16 different subunits, 5 of which are encoded in the nucleus.

The protein resides in the plastid. The protein localises to the chloroplast thylakoid membrane. It carries out the reaction a plastoquinone + NADH + (n+1) H(+)(in) = a plastoquinol + NAD(+) + n H(+)(out). It catalyses the reaction a plastoquinone + NADPH + (n+1) H(+)(in) = a plastoquinol + NADP(+) + n H(+)(out). Functionally, NDH shuttles electrons from NAD(P)H:plastoquinone, via FMN and iron-sulfur (Fe-S) centers, to quinones in the photosynthetic chain and possibly in a chloroplast respiratory chain. The immediate electron acceptor for the enzyme in this species is believed to be plastoquinone. Couples the redox reaction to proton translocation, and thus conserves the redox energy in a proton gradient. This chain is NAD(P)H-quinone oxidoreductase subunit 3, chloroplastic, found in Coffea arabica (Arabian coffee).